The primary structure comprises 453 residues: uncharacterized protein (453 aa).

A TRAM domain is found at 5 to 63 (LLKKNQSIELTIEDLTHDGSGVGKIDGYPFFIPNTLPGEKVTAKIIKLNKNYGFARMEN). C76, C82, C85, and C162 together coordinate [4Fe-4S] cluster. The S-adenosyl-L-methionine site is built by Q285, Y314, E335, and D383. The Nucleophile role is filled by C410.

This sequence belongs to the class I-like SAM-binding methyltransferase superfamily. RNA M5U methyltransferase family.

This is an uncharacterized protein from Listeria monocytogenes serovar 1/2a (strain ATCC BAA-679 / EGD-e).